The primary structure comprises 220 residues: Coat protein TP4 (220 aa).

It localises to the virion. In Thermoproteus tenax (TTV1), this protein is Coat protein TP4.